The chain runs to 481 residues: Palmitoyltransferase PFA4 (481 aa).

Residues 1 to 22 form a disordered region; the sequence is MTNQDPDDGAYPSSQSDDDGIE. At 1-66 the chain is on the cytoplasmic side; it reads MTNQDPDDGA…APLTGRRRTP (66 aa). A helical membrane pass occupies residues 67-87; it reads LSWTEVIWVSLTLLLIAVLGY. At 88–108 the chain is on the lumenal side; sequence SSQLYVMLPYYEKTPSFSPQA. A helical transmembrane segment spans residues 109 to 129; sequence LAAVLVPFNLGLLAIYYNYWL. Residues 130-223 lie on the Cytoplasmic side of the membrane; the sequence is CVTTDAGSVP…LANCVGHFNH (94 aa). The DHHC domain maps to 181–231; that stretch reads RYCKTCSAFKPPRSHHCKTCQRCVLRMDHHCPWLANCVGHFNHAHFIRFLF. The active-site S-palmitoyl cysteine intermediate is Cys-211. The helical transmembrane segment at 224–244 threads the bilayer; the sequence is AHFIRFLFYVDVTCLYHLIMI. Residues 245–265 lie on the Lumenal side of the membrane; sequence SCRVLDSFNSYTYWREPCARE. Residues 266–286 form a helical membrane-spanning segment; that stretch reads LVWLVVNYALCIPVILLVGIF. Topologically, residues 287 to 481 are cytoplasmic; it reads SLYHFYCLAV…EVRPHTPWSV (195 aa). The disordered stretch occupies residues 370–481; that stretch reads SQYRWPPKDP…EVRPHTPWSV (112 aa). The segment covering 418–431 has biased composition (low complexity); that stretch reads SSPSSSDSHSSLHL. Basic and acidic residues-rich tracts occupy residues 441 to 452 and 466 to 475; these read LPHHFDPPHDPD and RGSEGYEVRP.

The protein belongs to the DHHC palmitoyltransferase family. PFA4 subfamily.

The protein localises to the endoplasmic reticulum membrane. It catalyses the reaction L-cysteinyl-[protein] + hexadecanoyl-CoA = S-hexadecanoyl-L-cysteinyl-[protein] + CoA. Its function is as follows. Mediates the reversible addition of palmitate to target proteins, thereby regulating their membrane association and biological function. This is Palmitoyltransferase PFA4 from Mycosarcoma maydis (Corn smut fungus).